Reading from the N-terminus, the 1194-residue chain is Cohesin subunit SA-2 (1194 aa).

Residues 224–309 (FVHRYRDAIA…SRFKDRIVSM (86 aa)) form the SCD domain. A disordered region spans residues 986–1027 (DTMSVMSGMSGRGSSTRSKKIKPPTGKRKLPEAEESSSSDSM). Over residues 988-1001 (MSVMSGMSGRGSST) the composition is skewed to low complexity. A compositionally biased stretch (basic residues) spans 1002 to 1013 (RSKKIKPPTGKR).

The protein belongs to the SCC3 family. Part of the cohesin complex which is composed of a heterodimer between a SMC1 protein (SMC1A or SMC1B) and SMC3, which are attached via their hinge domain, and RAD21 which link them at their heads, and one STAG protein (STAG1, STAG2 or STAG3). In cohesin complexes, STAG2 is mutually exclusive with STAG1 and STAG3. Interacts directly with RAD21 in cohesin complex. Post-translationally, phosphorylated by PLK1. The large dissociation of cohesin from chromosome arms during prophase is partly due to its phosphorylation.

The protein localises to the nucleus. Its subcellular location is the chromosome. It is found in the centromere. Component of cohesin complex, a complex required for the cohesion of sister chromatids after DNA replication. The cohesin complex apparently forms a large proteinaceous ring within which sister chromatids can be trapped. At anaphase, the complex is cleaved and dissociates from chromatin, allowing sister chromatids to segregate. The cohesin complex may also play a role in spindle pole assembly during mitosis. This Xenopus laevis (African clawed frog) protein is Cohesin subunit SA-2 (stag2).